The chain runs to 269 residues: Formamidopyrimidine-DNA glycosylase (269 aa).

The active-site Schiff-base intermediate with DNA is P2. Catalysis depends on E3, which acts as the Proton donor. The Proton donor; for beta-elimination activity role is filled by K57. H90, R109, and K150 together coordinate DNA. The FPG-type zinc-finger motif lies at 235–269 (QVYGRKGEPCRVCGTPIVASKHAQRATFYCRQCQK). R259 functions as the Proton donor; for delta-elimination activity in the catalytic mechanism.

This sequence belongs to the FPG family. In terms of assembly, monomer. The cofactor is Zn(2+).

It carries out the reaction Hydrolysis of DNA containing ring-opened 7-methylguanine residues, releasing 2,6-diamino-4-hydroxy-5-(N-methyl)formamidopyrimidine.. The catalysed reaction is 2'-deoxyribonucleotide-(2'-deoxyribose 5'-phosphate)-2'-deoxyribonucleotide-DNA = a 3'-end 2'-deoxyribonucleotide-(2,3-dehydro-2,3-deoxyribose 5'-phosphate)-DNA + a 5'-end 5'-phospho-2'-deoxyribonucleoside-DNA + H(+). In terms of biological role, involved in base excision repair of DNA damaged by oxidation or by mutagenic agents. Acts as a DNA glycosylase that recognizes and removes damaged bases. Has a preference for oxidized purines, such as 7,8-dihydro-8-oxoguanine (8-oxoG). Has AP (apurinic/apyrimidinic) lyase activity and introduces nicks in the DNA strand. Cleaves the DNA backbone by beta-delta elimination to generate a single-strand break at the site of the removed base with both 3'- and 5'-phosphates. The sequence is that of Formamidopyrimidine-DNA glycosylase from Enterobacter sp. (strain 638).